The primary structure comprises 543 residues: ATP-dependent ubiquitin transferase-like protein Cap2 (543 aa).

An E2-like domain region spans residues 1-159 (MSSAAAVADV…QNCIVAHANG (159 aa)). The For E2-like domain role is filled by Cys84. The linker domain stretch occupies residues 160 to 305 (CPLWFITDNE…YLAQRNMPNS (146 aa)). An adenylation plus E1-like domain region spans residues 306-543 (KTLAGKNIAV…RDRECPLCNS (238 aa)). Active-site for E1-like domain residues include Cys450 and Cys453.

It in the C-terminal section; belongs to the HesA/MoeB/ThiF family. Forms a Cap2-CdnA complex. A Cap2 dimer is bound on either side by a CdnA monomer.

In terms of biological role, CD-NTase priming component of a CBASS antiviral system. CBASS (cyclic oligonucleotide-based antiphage signaling system) provides immunity against bacteriophages. The CD-NTase protein (CdnA) synthesizes cyclic nucleotides in response to infection; these serve as specific second messenger signals. The signals activate a diverse range of effectors, leading to bacterial cell death and thus abortive phage infection. A type II-A(GA) CBASS system. Functionally, acts as a protein transferase, conjugating CdnA, the CD-NTase, to unidentified target(s) in the cell probably via an E1-E2 ubiquitin transferase-like mechanism. This primes CdnA, upon phage infection CdnA activates and makes cyclic nucleotides. Protein conjugation requires ATP. Its function is as follows. The capV-cdnA-cap2-cap3 operon provides about 10(4)-fold protection in strain BWHPSA011 against infection by phage PaMx41. In P.aeruginosa strain PAO1 it confers protection against phages PaMx41 and JBD18 but not JBD67 (JBD18 and JBD67 do not replicate in BWHPSA011 / Pa011). When acb2 in JBD67 is deleted this CBASS operon then protects against JDB67 also. This CBASS system limits prophage induction of lysogenized JBD67 as well as viral lytic replication. The polypeptide is ATP-dependent ubiquitin transferase-like protein Cap2 (Pseudomonas aeruginosa (strain BWHPSA011 / Pa011)).